A 475-amino-acid chain; its full sequence is Ribulose bisphosphate carboxylase large chain (475 aa).

Positions 1-2 are excised as a propeptide; it reads MS. The residue at position 3 (proline 3) is an N-acetylproline. Lysine 14 bears the N6,N6,N6-trimethyllysine mark. Substrate-binding residues include asparagine 123 and threonine 173. The active-site Proton acceptor is lysine 175. Residue lysine 177 participates in substrate binding. The Mg(2+) site is built by lysine 201, aspartate 203, and glutamate 204. Lysine 201 is modified (N6-carboxylysine). The active-site Proton acceptor is histidine 294. Residues arginine 295, histidine 327, and serine 379 each contribute to the substrate site.

Belongs to the RuBisCO large chain family. Type I subfamily. As to quaternary structure, heterohexadecamer of 8 large chains and 8 small chains. It depends on Mg(2+) as a cofactor.

The protein localises to the plastid. It localises to the chloroplast. The enzyme catalyses 2 (2R)-3-phosphoglycerate + 2 H(+) = D-ribulose 1,5-bisphosphate + CO2 + H2O. The catalysed reaction is D-ribulose 1,5-bisphosphate + O2 = 2-phosphoglycolate + (2R)-3-phosphoglycerate + 2 H(+). In terms of biological role, ruBisCO catalyzes two reactions: the carboxylation of D-ribulose 1,5-bisphosphate, the primary event in carbon dioxide fixation, as well as the oxidative fragmentation of the pentose substrate in the photorespiration process. Both reactions occur simultaneously and in competition at the same active site. This is Ribulose bisphosphate carboxylase large chain from Chlorella vulgaris (Green alga).